We begin with the raw amino-acid sequence, 164 residues long: Thiol peroxidase (164 aa).

The region spanning 18-163 (VSEGQHAPDF…FDAALEAYRN (146 aa)) is the Thioredoxin domain. The active-site Cysteine sulfenic acid (-SOH) intermediate is the Cys-60. Cys-60 and Cys-93 are disulfide-bonded.

This sequence belongs to the peroxiredoxin family. Tpx subfamily. Homodimer.

It carries out the reaction a hydroperoxide + [thioredoxin]-dithiol = an alcohol + [thioredoxin]-disulfide + H2O. Thiol-specific peroxidase that catalyzes the reduction of hydrogen peroxide and organic hydroperoxides to water and alcohols, respectively. Plays a role in cell protection against oxidative stress by detoxifying peroxides. The polypeptide is Thiol peroxidase (Staphylococcus haemolyticus (strain JCSC1435)).